The primary structure comprises 165 residues: Nucleoside-triphosphatase THEP1 (165 aa).

Residues 7–14 (GRPGVGKT) and 93–100 (LVIIDEVG) contribute to the ATP site.

It belongs to the THEP1 NTPase family.

It catalyses the reaction a ribonucleoside 5'-triphosphate + H2O = a ribonucleoside 5'-diphosphate + phosphate + H(+). Its function is as follows. Has nucleotide phosphatase activity towards ATP, GTP, CTP, TTP and UTP. May hydrolyze nucleoside diphosphates with lower efficiency. The sequence is that of Nucleoside-triphosphatase THEP1 from Archaeoglobus fulgidus (strain ATCC 49558 / DSM 4304 / JCM 9628 / NBRC 100126 / VC-16).